The following is a 345-amino-acid chain: Glycerol-3-phosphate dehydrogenase [NAD(P)+] (345 aa).

The NADPH site is built by S11, W12, R32, R33, and K105. The sn-glycerol 3-phosphate site is built by K105, G136, and S138. A140 contributes to the NADPH binding site. Residues K191, D244, S254, R255, and N256 each contribute to the sn-glycerol 3-phosphate site. Residue K191 is the Proton acceptor of the active site. Position 255 (R255) interacts with NADPH. Positions 279 and 281 each coordinate NADPH.

The protein belongs to the NAD-dependent glycerol-3-phosphate dehydrogenase family.

Its subcellular location is the cytoplasm. It carries out the reaction sn-glycerol 3-phosphate + NAD(+) = dihydroxyacetone phosphate + NADH + H(+). The catalysed reaction is sn-glycerol 3-phosphate + NADP(+) = dihydroxyacetone phosphate + NADPH + H(+). It functions in the pathway membrane lipid metabolism; glycerophospholipid metabolism. Its function is as follows. Catalyzes the reduction of the glycolytic intermediate dihydroxyacetone phosphate (DHAP) to sn-glycerol 3-phosphate (G3P), the key precursor for phospholipid synthesis. The polypeptide is Glycerol-3-phosphate dehydrogenase [NAD(P)+] (Halalkalibacterium halodurans (strain ATCC BAA-125 / DSM 18197 / FERM 7344 / JCM 9153 / C-125) (Bacillus halodurans)).